A 149-amino-acid chain; its full sequence is Large ribosomal subunit protein bL9 (149 aa).

It belongs to the bacterial ribosomal protein bL9 family.

Its function is as follows. Binds to the 23S rRNA. The sequence is that of Large ribosomal subunit protein bL9 from Endomicrobium trichonymphae.